The primary structure comprises 1476 residues: MEEDKTFQSIRISENNNNNNNNNNNNNNNNNNNLNNNNDNDYDYDSINNIEEKFENVSKELEGQSIKFREIDGGKNNNNHDIELGERKPENEEDFKLRQYFEDSQRQKMLINHKPKKMGVSIKNLTVVGQGADNSVIVDNSTPFKALGKLLNPFNYFKKDKNKINTFNILNDINAFIEDGKMLLVLGRPGAGCSTLLRVIANQRESYISVDGDVTYGNIAASDWSKYRGETLYTGEEDIHHPTLTVRETLDFTLKLKTPGNRLPEESKRNFRTKIYELLVSMYGLVNQGDTMVGNEFVRGLSGGERKRITITEAMVSGSSITCWDCSTRGLDAASAYDYAKSLRIMSDTLDKTTIASFYQASDSIYNLFDKVIVLDKGRCIYFGPIGLAKQYFLDLGFDCEPRKSTPDFLTGITNPQERIVKVGFEGRVPETSVDLEDAWKKSQLFQSMKHAQLEYEKQVEQQKPSVDFKEQVLNEKSRTTSKNSEYSSSFYAQTIALTQRQLSLTWGDKFTLTSRFLTILVLSFIFGGIYFQQPLTTDGLFTRGGAIFTSIIFNCILTQGELHGALSGRRILQKHKSYALYRPSAYFVSQILIDIPFILVQVFLHSFIVYFMYGFEYRADKFFIFCFTLVGVSLSSASLFRGFANFTPSLFTAQNLMNFVFIFEVNYFGYSQTPDKMHSWFKWTYYINPLAYAFKSLMINEFKGLDFSCLDSAIPFDHFNNSTYSDMSHRICAVPGSIEGSLSVKGENYLWDALQINSDHRALNVVVIFLFWLFYIGLNLFAVEYFDWTSGGYTHKVYKRGKAPKLNDVEEERNQNQIVKKATDNMKDTLKMRGGLFSWKSISYTVPVAGTNKLLLDDIMGWIKPGQMTALMGSSGAGKTTLLDVLAKRKTMGTVTGESLLNGKQLEIDFERITGYVEQMDVHNPGLTVREALRFSAKLRQEPWVPLKDKYQYVEHVLEMMEMKHLGDALIGTLETGVGISVEERKRLTIGVELVAKPQILFLDEPTSGLDAQSSYNIIKFIRKLADAGMPLVCTIHQPSSVLFEHFDRILLLARGGKTVYFGDIGDKSKTLTSYFERHGVRPCTESENPAEYILEATGAGIHGKTDVNWPEAWKQSSEYQNVVNELDLLRTKEELGKYILDSDLQVDGKQAPPREFANGFLTQFIEVYKRLNIIYYRDVFYTMGSFAQSAVSGLVIGFTFYDLKNSSSDQQQRIFMSWEAMILGVLLIYLVLPMFFIQKEYFKRDTASKYYSWHAFSLSMIAVEIPYVVLSSTLFFIATYWTSGIDSTASANFYYWLMHTMFSVYIVSFAQALGAACVNIAISIAALPIVLFYLFLLCGVQIPPPAMSSFYQDWLYHLNPAKYFLEGLITTVLKPIEVLCTDVDLIKFTAPSGTDCQTYSAPFLQQATGYVVPLSNTTNECGYCIYSSGSDYFETSLGWDYGHRWRNFGIIVAYWGSSILAVLFFVYLTQKPRR.

2 disordered regions span residues 13–45 (SENNNNNNNNNNNNNNNNNNNLNNNNDNDYDYD) and 68–91 (FREIDGGKNNNNHDIELGERKPEN). A coiled-coil region spans residues 14-67 (ENNNNNNNNNNNNNNNNNNNLNNNNDNDYDYDSINNIEEKFENVSKELEGQSIK). Residues 15–39 (NNNNNNNNNNNNNNNNNNNLNNNND) are compositionally biased toward low complexity. An ABC transporter 1 domain is found at 151–402 (LNPFNYFKKD…FLDLGFDCEP (252 aa)). Positions 507–751 (WGDKFTLTSR…SLSVKGENYL (245 aa)) constitute an ABC transmembrane type-2 1 domain. A run of 5 helical transmembrane segments spans residues 517–537 (FLTILVLSFIFGGIYFQQPLT), 547–567 (AIFTSIIFNCILTQGELHGAL), 592–612 (ILIDIPFILVQVFLHSFIVYF), 623–643 (FFIFCFTLVGVSLSSASLFRG), and 764–784 (LNVVVIFLFWLFYIGLNLFAV). Residues 838 to 1082 (FSWKSISYTV…LTSYFERHGV (245 aa)) form the ABC transporter 2 domain. 874 to 881 (GSSGAGKT) contacts ATP. 6 helical membrane passes run 1182 to 1202 (FYTMGSFAQSAVSGLVIGFTF), 1219 to 1239 (SWEAMILGVLLIYLVLPMFFI), 1260 to 1280 (LSMIAVEIPYVVLSSTLFFIA), 1298 to 1318 (WLMHTMFSVYIVSFAQALGAA), 1322 to 1342 (IAISIAALPIVLFYLFLLCGV), and 1450 to 1470 (FGIIVAYWGSSILAVLFFVYL). Residues 1182–1405 (FYTMGSFAQS…TDCQTYSAPF (224 aa)) form the ABC transmembrane type-2 2 domain.

The protein belongs to the ABC transporter superfamily. ABCG family. PDR (TC 3.A.1.205) subfamily.

The protein localises to the membrane. This chain is ABC transporter G family member 17 (abcG17-1), found in Dictyostelium discoideum (Social amoeba).